Here is a 68-residue protein sequence, read N- to C-terminus: Large ribosomal subunit protein bL35 (68 aa).

The protein belongs to the bacterial ribosomal protein bL35 family.

The sequence is that of Large ribosomal subunit protein bL35 from Wolbachia pipientis wMel.